Reading from the N-terminus, the 434-residue chain is Trigger factor (434 aa).

In terms of domain architecture, PPIase FKBP-type spans 160 to 245 (GDKVKMNFVG…LTEVQAANLP (86 aa)).

Belongs to the FKBP-type PPIase family. Tig subfamily.

Its subcellular location is the cytoplasm. It carries out the reaction [protein]-peptidylproline (omega=180) = [protein]-peptidylproline (omega=0). Functionally, involved in protein export. Acts as a chaperone by maintaining the newly synthesized protein in an open conformation. Functions as a peptidyl-prolyl cis-trans isomerase. This chain is Trigger factor, found in Shewanella sp. (strain W3-18-1).